Consider the following 938-residue polypeptide: Isoleucine--tRNA ligase (938 aa).

Positions 58-68 (PYANGSIHIGH) match the 'HIGH' region motif. An L-isoleucyl-5'-AMP-binding site is contributed by Glu-561. Positions 602-606 (KMSKS) match the 'KMSKS' region motif. Residue Lys-605 participates in ATP binding. Residues Cys-901, Cys-904, Cys-921, and Cys-924 each coordinate Zn(2+).

Belongs to the class-I aminoacyl-tRNA synthetase family. IleS type 1 subfamily. In terms of assembly, monomer. Zn(2+) is required as a cofactor.

It is found in the cytoplasm. It catalyses the reaction tRNA(Ile) + L-isoleucine + ATP = L-isoleucyl-tRNA(Ile) + AMP + diphosphate. Catalyzes the attachment of isoleucine to tRNA(Ile). As IleRS can inadvertently accommodate and process structurally similar amino acids such as valine, to avoid such errors it has two additional distinct tRNA(Ile)-dependent editing activities. One activity is designated as 'pretransfer' editing and involves the hydrolysis of activated Val-AMP. The other activity is designated 'posttransfer' editing and involves deacylation of mischarged Val-tRNA(Ile). The sequence is that of Isoleucine--tRNA ligase from Cronobacter sakazakii (strain ATCC BAA-894) (Enterobacter sakazakii).